The following is a 145-amino-acid chain: Deoxyuridine 5'-triphosphate nucleotidohydrolase (145 aa).

Residues 65–67, asparagine 78, 82–84, and lysine 92 contribute to the substrate site; these read RSG and TID.

Belongs to the dUTPase family. Mg(2+) serves as cofactor.

It carries out the reaction dUTP + H2O = dUMP + diphosphate + H(+). It participates in pyrimidine metabolism; dUMP biosynthesis; dUMP from dCTP (dUTP route): step 2/2. In terms of biological role, this enzyme is involved in nucleotide metabolism: it produces dUMP, the immediate precursor of thymidine nucleotides and it decreases the intracellular concentration of dUTP so that uracil cannot be incorporated into DNA. The polypeptide is Deoxyuridine 5'-triphosphate nucleotidohydrolase (Syntrophomonas wolfei subsp. wolfei (strain DSM 2245B / Goettingen)).